The following is a 201-amino-acid chain: Holliday junction branch migration complex subunit RuvA (201 aa).

The interval 1 to 63 is domain I; the sequence is MIAFVSGTVA…EDSLTLYGFA (63 aa). The segment at 64–139 is domain II; that stretch reads DDDERQVFEL…RLGEPIGAPA (76 aa). Residues 139-143 are flexible linker; sequence AVGAP. Residues 144-201 are domain III; that stretch reads VSTGWRDQLHAALIGLGYATREADEAVSAVAPQAEAAGGTPQVGALLKAALQTLNRAR.

Belongs to the RuvA family. Homotetramer. Forms an RuvA(8)-RuvB(12)-Holliday junction (HJ) complex. HJ DNA is sandwiched between 2 RuvA tetramers; dsDNA enters through RuvA and exits via RuvB. An RuvB hexamer assembles on each DNA strand where it exits the tetramer. Each RuvB hexamer is contacted by two RuvA subunits (via domain III) on 2 adjacent RuvB subunits; this complex drives branch migration. In the full resolvosome a probable DNA-RuvA(4)-RuvB(12)-RuvC(2) complex forms which resolves the HJ.

Its subcellular location is the cytoplasm. In terms of biological role, the RuvA-RuvB-RuvC complex processes Holliday junction (HJ) DNA during genetic recombination and DNA repair, while the RuvA-RuvB complex plays an important role in the rescue of blocked DNA replication forks via replication fork reversal (RFR). RuvA specifically binds to HJ cruciform DNA, conferring on it an open structure. The RuvB hexamer acts as an ATP-dependent pump, pulling dsDNA into and through the RuvAB complex. HJ branch migration allows RuvC to scan DNA until it finds its consensus sequence, where it cleaves and resolves the cruciform DNA. The sequence is that of Holliday junction branch migration complex subunit RuvA from Streptomyces coelicolor (strain ATCC BAA-471 / A3(2) / M145).